The following is a 741-amino-acid chain: Transketolase-1, chloroplastic (741 aa).

Residues 1–66 (MASTSSLALS…NRSLRPLVRA (66 aa)) constitute a chloroplast transit peptide. The segment at 22–51 (GSDQRGSLPAFSGLKSTGSRASASSRRRIA) is disordered. At Ala67 the chain carries N-acetylalanine. His103 is a substrate binding site. Thiamine diphosphate is bound by residues His143 and 192-194 (GPL). Mg(2+) is bound at residue Asp233. Gly234 and Asn263 together coordinate thiamine diphosphate. Mg(2+) contacts are provided by Asn263 and Ile265. A substrate-binding site is contributed by His340. His340 provides a ligand contact to thiamine diphosphate. The residue at position 428 (Ser428) is a Phosphoserine. Residues Arg434 and Ser461 each coordinate substrate. Positions 488 and 515 each coordinate thiamine diphosphate. Glu488 serves as the catalytic Proton donor. Residues His539, Asp547, and Arg598 each contribute to the substrate site.

Belongs to the transketolase family. Homodimer. Mg(2+) serves as cofactor. Requires Ca(2+) as cofactor. Mn(2+) is required as a cofactor. It depends on Co(2+) as a cofactor. The cofactor is thiamine diphosphate.

It localises to the plastid. The protein localises to the chloroplast stroma. The catalysed reaction is D-sedoheptulose 7-phosphate + D-glyceraldehyde 3-phosphate = aldehydo-D-ribose 5-phosphate + D-xylulose 5-phosphate. It participates in carbohydrate biosynthesis; Calvin cycle. Its function is as follows. Catalyzes the reversible transfer of a two-carbon ketol group from fructose-6-phosphate or sedoheptulose-7-phosphate to glyceraldehyde-3-phosphate to yield xylulose-5-phosphate and erythrose-4-phosphate or ribose-5-phosphate, respectively. Could act as a stress sensor involved in adaptation process. The protein is Transketolase-1, chloroplastic (TKL-1) of Arabidopsis thaliana (Mouse-ear cress).